The sequence spans 223 residues: MKSAVVQLPGLNRDRDMIAALTKISGQPPVTIWQTETEIPDVDLIVIPGGFSYGDYLRCGAIAARMPVMQAIIDKASKGVKVLGVCNGFQILVEAGLLPGALMRNSSLKFVCREIKLEVVNAETDFTRAYAQGQVIRCPVAHHDGNYFADDATLAAIEGNGQVVFRYAEGTNPNGSINDIAAVMNEKGNVLGMMPHPENLIEAAHGGSDGRGLFASALDVIAA.

A Glutamine amidotransferase type-1 domain is found at 3–223 (SAVVQLPGLN…FASALDVIAA (221 aa)). Catalysis depends on C86, which acts as the Nucleophile. Active-site residues include H196 and E198.

As to quaternary structure, part of the FGAM synthase complex composed of 1 PurL, 1 PurQ and 2 PurS subunits.

The protein resides in the cytoplasm. The catalysed reaction is N(2)-formyl-N(1)-(5-phospho-beta-D-ribosyl)glycinamide + L-glutamine + ATP + H2O = 2-formamido-N(1)-(5-O-phospho-beta-D-ribosyl)acetamidine + L-glutamate + ADP + phosphate + H(+). The enzyme catalyses L-glutamine + H2O = L-glutamate + NH4(+). The protein operates within purine metabolism; IMP biosynthesis via de novo pathway; 5-amino-1-(5-phospho-D-ribosyl)imidazole from N(2)-formyl-N(1)-(5-phospho-D-ribosyl)glycinamide: step 1/2. Functionally, part of the phosphoribosylformylglycinamidine synthase complex involved in the purines biosynthetic pathway. Catalyzes the ATP-dependent conversion of formylglycinamide ribonucleotide (FGAR) and glutamine to yield formylglycinamidine ribonucleotide (FGAM) and glutamate. The FGAM synthase complex is composed of three subunits. PurQ produces an ammonia molecule by converting glutamine to glutamate. PurL transfers the ammonia molecule to FGAR to form FGAM in an ATP-dependent manner. PurS interacts with PurQ and PurL and is thought to assist in the transfer of the ammonia molecule from PurQ to PurL. The chain is Phosphoribosylformylglycinamidine synthase subunit PurQ from Rhizobium johnstonii (strain DSM 114642 / LMG 32736 / 3841) (Rhizobium leguminosarum bv. viciae).